The chain runs to 160 residues: Regulatory protein RecX (160 aa).

Belongs to the RecX family.

The protein resides in the cytoplasm. Functionally, modulates RecA activity. This chain is Regulatory protein RecX, found in Pelodictyon phaeoclathratiforme (strain DSM 5477 / BU-1).